The chain runs to 610 residues: Probable pleckstrin homology domain-containing family N member 1 (610 aa).

The interval methionine 1–aspartate 30 is disordered. Residue glycine 2 is the site of N-myristoyl glycine attachment. The interaction with C1QBP stretch occupies residues threonine 61–serine 100. 2 PH domains span residues valine 96–leucine 192 and alanine 227–aspartate 324. Tyrosine 307 carries the phosphotyrosine modification. 4 disordered regions span residues histidine 327 to arginine 357, glutamine 371 to leucine 431, leucine 443 to arginine 473, and proline 493 to isoleucine 610. Composition is skewed to polar residues over residues glutamine 371–threonine 380 and asparagine 391–glutamine 402. At tyrosine 462 the chain carries Phosphotyrosine. The segment covering valine 504–serine 526 has biased composition (low complexity).

In terms of assembly, found in a complex with cytochrome c mRNA and various ribosomal proteins. Interacts with C1QBP, ELAVL1 and BID. Post-translationally, phosphorylation is essential for its mitochondrial localization and regulates its interaction with C1QBP. Testis and adipose tissue (at protein level). Ubiquitous.

The protein resides in the cell membrane. It localises to the mitochondrion membrane. It is found in the mitochondrion. Functionally, controls the stability of the leptin mRNA harboring an AU-rich element (ARE) in its 3' UTR, in cooperation with the RNA stabilizer ELAVL1. Decreases the stability of the leptin mRNA by antagonizing the function of ELAVL1 by inducing its atypical recruitment from the nucleus to the cytosol. Binds to cardiolipin (CL), phosphatidic acid (PA), phosphatidylinositol 4-phosphate (PtdIns(4)P) and phosphatidylserine (PS). This Mus musculus (Mouse) protein is Probable pleckstrin homology domain-containing family N member 1 (Plekhn1).